The following is a 297-amino-acid chain: Acetyl-coenzyme A carboxylase carboxyl transferase subunit beta (297 aa).

In terms of domain architecture, CoA carboxyltransferase N-terminal spans 27–296 (LWHKCPSCEA…PEEAREAAAV (270 aa)). Residues C31, C34, C50, and C53 each coordinate Zn(2+). The C4-type zinc-finger motif lies at 31–53 (CPSCEAVLYRPELEKTLDVCPKC).

It belongs to the AccD/PCCB family. In terms of assembly, acetyl-CoA carboxylase is a heterohexamer composed of biotin carboxyl carrier protein (AccB), biotin carboxylase (AccC) and two subunits each of ACCase subunit alpha (AccA) and ACCase subunit beta (AccD). The cofactor is Zn(2+).

The protein localises to the cytoplasm. The enzyme catalyses N(6)-carboxybiotinyl-L-lysyl-[protein] + acetyl-CoA = N(6)-biotinyl-L-lysyl-[protein] + malonyl-CoA. It functions in the pathway lipid metabolism; malonyl-CoA biosynthesis; malonyl-CoA from acetyl-CoA: step 1/1. Component of the acetyl coenzyme A carboxylase (ACC) complex. Biotin carboxylase (BC) catalyzes the carboxylation of biotin on its carrier protein (BCCP) and then the CO(2) group is transferred by the transcarboxylase to acetyl-CoA to form malonyl-CoA. This chain is Acetyl-coenzyme A carboxylase carboxyl transferase subunit beta, found in Pseudomonas putida (strain ATCC 700007 / DSM 6899 / JCM 31910 / BCRC 17059 / LMG 24140 / F1).